The primary structure comprises 207 residues: Large ribosomal subunit protein uL4 (207 aa).

The interval 48 to 70 (KAQKTRSEVSGGGAKPWRQKGTG) is disordered.

Belongs to the universal ribosomal protein uL4 family. Part of the 50S ribosomal subunit.

In terms of biological role, one of the primary rRNA binding proteins, this protein initially binds near the 5'-end of the 23S rRNA. It is important during the early stages of 50S assembly. It makes multiple contacts with different domains of the 23S rRNA in the assembled 50S subunit and ribosome. Its function is as follows. Forms part of the polypeptide exit tunnel. The polypeptide is Large ribosomal subunit protein uL4 (Francisella philomiragia subsp. philomiragia (strain ATCC 25017 / CCUG 19701 / FSC 153 / O#319-036)).